Here is a 58-residue protein sequence, read N- to C-terminus: Small ribosomal subunit protein bS21 (58 aa).

Residues 35–58 (REHYEKPSVKRKKKSEAARKRKFK) form a disordered region. Over residues 43–58 (VKRKKKSEAARKRKFK) the composition is skewed to basic residues.

This sequence belongs to the bacterial ribosomal protein bS21 family.

The protein is Small ribosomal subunit protein bS21 of Ruminiclostridium cellulolyticum (strain ATCC 35319 / DSM 5812 / JCM 6584 / H10) (Clostridium cellulolyticum).